Consider the following 192-residue polypeptide: Shikimate kinase (192 aa).

27–32 provides a ligand contact to ATP; that stretch reads GTGKTT. A Mg(2+)-binding site is contributed by T31. Substrate is bound by residues D49, R73, and G95. Residue R133 participates in ATP binding. R152 contacts substrate.

The protein belongs to the shikimate kinase family. Monomer. Requires Mg(2+) as cofactor.

The protein resides in the cytoplasm. It catalyses the reaction shikimate + ATP = 3-phosphoshikimate + ADP + H(+). It functions in the pathway metabolic intermediate biosynthesis; chorismate biosynthesis; chorismate from D-erythrose 4-phosphate and phosphoenolpyruvate: step 5/7. In terms of biological role, catalyzes the specific phosphorylation of the 3-hydroxyl group of shikimic acid using ATP as a cosubstrate. The protein is Shikimate kinase of Hahella chejuensis (strain KCTC 2396).